A 228-amino-acid polypeptide reads, in one-letter code: Aldehyde dehydrogenase 9 (228 aa).

Position 76–81 (76–81 (GSTETA)) interacts with NAD(+). Residues Glu-99 and Cys-132 contribute to the active site.

The protein belongs to the aldehyde dehydrogenase family.

It carries out the reaction an aldehyde + NAD(+) + H2O = a carboxylate + NADH + 2 H(+). It participates in alcohol metabolism; ethanol degradation; acetate from ethanol: step 2/2. The polypeptide is Aldehyde dehydrogenase 9 (ALDH9) (Polyandrocarpa misakiensis (Tunicate)).